A 243-amino-acid chain; its full sequence is Triosephosphate isomerase (243 aa).

9–11 (NWK) contributes to the substrate binding site. The active-site Electrophile is the His-96. The active-site Proton acceptor is Glu-165. Residues Gly-171, Ser-204, and 225-226 (GG) each bind substrate.

It belongs to the triosephosphate isomerase family. Homodimer.

The protein localises to the cytoplasm. It catalyses the reaction D-glyceraldehyde 3-phosphate = dihydroxyacetone phosphate. Its pathway is carbohydrate biosynthesis; gluconeogenesis. It participates in carbohydrate degradation; glycolysis; D-glyceraldehyde 3-phosphate from glycerone phosphate: step 1/1. Its function is as follows. Involved in the gluconeogenesis. Catalyzes stereospecifically the conversion of dihydroxyacetone phosphate (DHAP) to D-glyceraldehyde-3-phosphate (G3P). The sequence is that of Triosephosphate isomerase from Prochlorococcus marinus (strain MIT 9313).